Reading from the N-terminus, the 259-residue chain is Steroidogenic acute regulatory-like protein 1 (259 aa).

Positions 1–20 (MTLLPFTCLILLYSLGSVMS) are cleaved as a signal peptide. Residues 43-254 (YATALKTCGE…NRRHFQNLKA (212 aa)) enclose the START domain.

The chain is Steroidogenic acute regulatory-like protein 1 (strl-1) from Caenorhabditis elegans.